The sequence spans 586 residues: Asparagine synthetase [glutamine-hydrolyzing] (586 aa).

The active-site For GATase activity is cysteine 2. Positions cysteine 2–glycine 185 constitute a Glutamine amidotransferase type-2 domain. L-glutamine is bound by residues arginine 50–isoleucine 54, asparagine 75–glutamate 77, and aspartate 98. Residues proline 193–proline 516 enclose the Asparagine synthetase domain. Residues leucine 231, isoleucine 267, and serine 341–glycine 342 contribute to the ATP site.

The catalysed reaction is L-aspartate + L-glutamine + ATP + H2O = L-asparagine + L-glutamate + AMP + diphosphate + H(+). It participates in amino-acid biosynthesis; L-asparagine biosynthesis; L-asparagine from L-aspartate (L-Gln route): step 1/1. In terms of biological role, essential for nitrogen assimilation, distribution and remobilization within the plant via the phloem. The sequence is that of Asparagine synthetase [glutamine-hydrolyzing] (ASN1) from Zea mays (Maize).